A 188-amino-acid polypeptide reads, in one-letter code: Epididymal-specific lipocalin-5 (188 aa).

The signal sequence occupies residues 1 to 19 (MENIMPFALLGLCVGLAAG). Cysteine 82 and cysteine 176 are joined by a disulfide.

Belongs to the calycin superfamily. Lipocalin family. There are two similar, immunologically cross-reacting forms of this protein, designated B and C, which probably result from different processing of the amino end. In terms of processing, the N-terminus of form C is probably blocked. In terms of tissue distribution, synthesized exclusively in the proximal part (caput epididymidis) of the epididymis. It makes up a substantial part of the total protein in the epididymal luminal fluid and binds to the sperm membrane.

Its subcellular location is the secreted. Its function is as follows. Associates with spermatozoa in the epididymal fluid but does not bind tightly to them. Binds both all-trans and 9-cis retinoic acid. May act as a retinoid carrier protein which is required for epididymal function and/or sperm maturation. This Rattus norvegicus (Rat) protein is Epididymal-specific lipocalin-5 (Lcn5).